The primary structure comprises 85 residues: Small muscular protein (85 aa).

The disordered stretch occupies residues 19 to 63 (PMGAFRPGAGQPPRRKESTPGTAEGAPATPEEKKPVPGMKKFPGP). At serine 36 the chain carries Phosphoserine. Threonine 47 is modified (phosphothreonine).

Belongs to the SMPX family.

Functionally, plays a role in the regulatory network through which muscle cells coordinate their structural and functional states during growth, adaptation, and repair. The polypeptide is Small muscular protein (Smpx) (Rattus norvegicus (Rat)).